Here is a 122-residue protein sequence, read N- to C-terminus: Large ribosomal subunit protein uL14c (122 aa).

The protein belongs to the universal ribosomal protein uL14 family. Part of the 50S ribosomal subunit.

The protein localises to the plastid. Its subcellular location is the chloroplast. Functionally, binds to 23S rRNA. The sequence is that of Large ribosomal subunit protein uL14c from Buxus microphylla (Littleleaf boxwood).